Reading from the N-terminus, the 203-residue chain is Recombination protein RecR (203 aa).

The C4-type zinc finger occupies 56–71; sequence CTVCGNVSDDERCRIC. The region spanning 79 to 179 is the Toprim domain; sequence SVVCVVEEPK…TVTRIASGLP (101 aa).

This sequence belongs to the RecR family.

In terms of biological role, may play a role in DNA repair. It seems to be involved in an RecBC-independent recombinational process of DNA repair. It may act with RecF and RecO. This chain is Recombination protein RecR, found in Mycobacterium leprae (strain TN).